The chain runs to 129 residues: Small ribosomal subunit protein uS11 (129 aa).

The protein belongs to the universal ribosomal protein uS11 family. In terms of assembly, part of the 30S ribosomal subunit. Interacts with proteins S7 and S18. Binds to IF-3.

Functionally, located on the platform of the 30S subunit, it bridges several disparate RNA helices of the 16S rRNA. Forms part of the Shine-Dalgarno cleft in the 70S ribosome. The polypeptide is Small ribosomal subunit protein uS11 (Nitrosomonas eutropha (strain DSM 101675 / C91 / Nm57)).